A 253-amino-acid chain; its full sequence is DNA repair protein RecO (253 aa).

This sequence belongs to the RecO family.

Involved in DNA repair and RecF pathway recombination. In Dehalococcoides mccartyi (strain CBDB1), this protein is DNA repair protein RecO.